Consider the following 272-residue polypeptide: Sulfate transporter CysZ (272 aa).

The next 4 membrane-spanning stretches (helical) occupy residues 29–49 (FVII…WLFI), 66–86 (WLSF…LLLF), 148–168 (IIAL…VPVL), and 219–239 (FVPV…TLMW).

Belongs to the CysZ family.

It is found in the cell inner membrane. Functionally, high affinity, high specificity proton-dependent sulfate transporter, which mediates sulfate uptake. Provides the sulfur source for the cysteine synthesis pathway. The sequence is that of Sulfate transporter CysZ from Haemophilus influenzae (strain 86-028NP).